Reading from the N-terminus, the 787-residue chain is ER degradation-enhancing alpha-mannosidase-like protein 1 (787 aa).

The first 22 residues, 1-22, serve as a signal peptide directing secretion; that stretch reads MGSLHSIFCVCLILLCIFKENS. 5 N-linked (GlcNAc...) asparagine glycosylation sites follow: N479, N609, N670, N693, and N756.

This sequence belongs to the glycosyl hydrolase 47 family.

The protein localises to the endoplasmic reticulum lumen. In terms of biological role, alpha-mannosidase-like protein involved in endoplasmic reticulum-associated degradation (ERAD). Delivers misfolded glycoproteins to proteasomes. It lacks mannosidase activity. The sequence is that of ER degradation-enhancing alpha-mannosidase-like protein 1 (mnl1) from Schizosaccharomyces pombe (strain 972 / ATCC 24843) (Fission yeast).